The sequence spans 308 residues: 3'(2'),5'-bisphosphate nucleotidase 1 (308 aa).

Position 2 is an N-acetylalanine (Ala2). Asp51 acts as the Proton acceptor in catalysis. The Mg(2+) site is built by Glu74, Asp117, Leu119, and Asp120. Thr122 serves as the catalytic Proton acceptor. Phosphothreonine is present on Thr122. 4 residues coordinate AMP: Thr195, His198, Gly220, and Lys224. Residue Ser240 is modified to Phosphoserine. Lys244 is subject to N6-succinyllysine. Asp247 serves as a coordination point for Mg(2+).

It belongs to the inositol monophosphatase superfamily. It depends on Mg(2+) as a cofactor. As to expression, widely expressed. Highly expressed in kidney.

The catalysed reaction is adenosine 3',5'-bisphosphate + H2O = AMP + phosphate. The enzyme catalyses adenosine 2',5'-bisphosphate + H2O = AMP + phosphate. It carries out the reaction 3'-phosphoadenylyl sulfate + H2O = adenosine 5'-phosphosulfate + phosphate. It catalyses the reaction 1D-myo-inositol 1,4-bisphosphate + H2O = 1D-myo-inositol 4-phosphate + phosphate. The catalysed reaction is 1D-myo-inositol 1,3,4-trisphosphate + H2O = 1D-myo-inositol 3,4-bisphosphate + phosphate. With respect to regulation, uncompetitively inhibited by Li(+) (IC(50)=157 uM). PAP hydrolysis is competitively inhibited by PAPS (IC(50)=0.7 uM) and by inositol 1,4-bisphosphate (IC(50)=15 uM). Phosphatase that converts 3'(2')-phosphoadenosine 5'-phosphate (PAP) to AMP and adenosine 3'-phosphate 5'-phosphosulfate (PAPS) to adenosine 5'-phosphosulfate (APS). Is also able to hydrolyze inositol 1,4-bisphosphate (Ins(1,4)P2) and inositol 1,3,4-trisphosphate (Ins(1,3,4)P3), and is not active on Ins(1)P, Ins(4)P, Ins(3,4)P2, Ins(1,4,5)P3, Ins(1,3,4,5)P4, Ins(1,3,4,5,6)P5 or InsP6. Probably prevents the toxic accumulation of PAP, a compound which inhibits a variety of proteins, including PAPS-utilizing enzymes such as sulfotransferases, and RNA processing enzymes. Could also play a role in inositol recycling and phosphoinositide metabolism. This is 3'(2'),5'-bisphosphate nucleotidase 1 (Bpnt1) from Mus musculus (Mouse).